Here is a 147-residue protein sequence, read N- to C-terminus: Signal peptidase complex subunit 3 (147 aa).

Over 1-6 the chain is Cytoplasmic; it reads MHSWVQ. Residues 7–29 traverse the membrane as a helical; Signal-anchor for type II membrane protein segment; sequence RLLTTATTAALLLLAACCAASAL. The Lumenal portion of the chain corresponds to 30–147; the sequence is DAFHVPSVQA…EFNLPDSYTS (118 aa).

It belongs to the SPCS3 family. In terms of assembly, component of the signal peptidase complex (SPC) composed of a catalytic subunit SEC11 and three accessory subunits SPCS1, SPCS2 and SPCS3. The complex induces a local thinning of the ER membrane which is used to measure the length of the signal peptide (SP) h-region of protein substrates. This ensures the selectivity of the complex towards h-regions shorter than 18-20 amino acids.

It localises to the endoplasmic reticulum membrane. In terms of biological role, essential component of the signal peptidase complex (SPC) which catalyzes the cleavage of N-terminal signal sequences from nascent proteins as they are translocated into the lumen of the endoplasmic reticulum. Essential for the SPC catalytic activity, possibly by stabilizing and positioning the active center of the complex close to the lumenal surface. The sequence is that of Signal peptidase complex subunit 3 from Oryza sativa subsp. japonica (Rice).